Here is a 97-residue protein sequence, read N- to C-terminus: DNA/RNA-binding protein Alba (97 aa).

Lys15 carries the post-translational modification N6-acetyllysine.

The protein belongs to the histone-like Alba family. Post-translationally, acetylated. Acetylation at Lys-15 decreases DNA-binding affinity.

It localises to the cytoplasm. Its subcellular location is the chromosome. Binds double-stranded DNA tightly but without sequence specificity. Involved in DNA compaction. This chain is DNA/RNA-binding protein Alba, found in Ignicoccus hospitalis (strain KIN4/I / DSM 18386 / JCM 14125).